The sequence spans 604 residues: MDCMYDAELVDVVKNTSNESILPILEQKINLLVSSGETKCYRTLKRILYDFVTRKHLDGIMYILDSELLTDNVIRKIDRYCILLSCKFGFVELLEYLDEIGVDILVEKIYLELIFEDSFKYSRYDHDDEYYDDHFFKSSIHYAVKYGHMNIIEYLSCKKTNADGLLSACSLKNIQLVKYFLDQQNYDDNTIYHGLRSACWNGDLEMVKYFMQYIPEDKRNNVFILDHVCEEGYFDILVYLIEQKWKIDVEFAIKQTVMGGRLEMLKYLIAQYPDSKYSVVKLIETISYCGKDETLEYLLSFEDSKLKKFIKSNKFSKLLEVVCERGYLKVFKILFHLNENVDLREAFSNACQNGHLDIVQYIISNKKEFTDKNFLENDQEHITYLTRITFAKGHLDILKCLDEIGISRSYISEYAASLVIGNGFRSKKTLECVQWLFEDEKYHKYSQAIAVKAFRYDTVSVIKYLVSVGLDIKPITNIALDYICINNNMDCLKYLIENGTDITINDNRAIKLAAQEDNIDIVKCLVENGADIRTDDDYVMKICTLRNHKVLIRYLMSLDIKEPSNESIESIEPINTIKNPNKSEKNWIKHHCESIYYTKLMDRP.

ANK repeat units lie at residues 77-106, 135-164, 166-189, 190-219, 221-247, 248-277, 314-341, 342-371, 380-410, 445-474, 475-504, 505-534, and 535-565; these read IDRY…DILV, FFKS…NADG, LSAC…YDDN, TIYH…EDKR, NVFI…KWKI, DVEF…DSKY, KFSK…NENV, DLRE…EFTD, EHIT…SRSY, YSQA…DIKP, ITNI…DITI, NDNR…DIRT, and DDDY…EPSN.

This Acanthamoeba polyphaga (Amoeba) protein is Putative ankyrin repeat protein L56.